The primary structure comprises 572 residues: Proline--tRNA ligase (572 aa).

Belongs to the class-II aminoacyl-tRNA synthetase family. ProS type 1 subfamily. Homodimer.

The protein resides in the cytoplasm. It catalyses the reaction tRNA(Pro) + L-proline + ATP = L-prolyl-tRNA(Pro) + AMP + diphosphate. Its function is as follows. Catalyzes the attachment of proline to tRNA(Pro) in a two-step reaction: proline is first activated by ATP to form Pro-AMP and then transferred to the acceptor end of tRNA(Pro). As ProRS can inadvertently accommodate and process non-cognate amino acids such as alanine and cysteine, to avoid such errors it has two additional distinct editing activities against alanine. One activity is designated as 'pretransfer' editing and involves the tRNA(Pro)-independent hydrolysis of activated Ala-AMP. The other activity is designated 'posttransfer' editing and involves deacylation of mischarged Ala-tRNA(Pro). The misacylated Cys-tRNA(Pro) is not edited by ProRS. This Klebsiella pneumoniae (strain 342) protein is Proline--tRNA ligase.